We begin with the raw amino-acid sequence, 105 residues long: uncharacterized protein (105 aa).

This is an uncharacterized protein from Escherichia coli (strain K12).